The sequence spans 98 residues: NADH-ubiquinone oxidoreductase chain 4L (98 aa).

3 consecutive transmembrane segments (helical) span residues 1–21 (MMSI…GVLI), 28–48 (STLL…ALLI), and 59–79 (APLI…ALLV).

The protein belongs to the complex I subunit 4L family. As to quaternary structure, core subunit of respiratory chain NADH dehydrogenase (Complex I) which is composed of 45 different subunits.

The protein resides in the mitochondrion inner membrane. The catalysed reaction is a ubiquinone + NADH + 5 H(+)(in) = a ubiquinol + NAD(+) + 4 H(+)(out). Functionally, core subunit of the mitochondrial membrane respiratory chain NADH dehydrogenase (Complex I) which catalyzes electron transfer from NADH through the respiratory chain, using ubiquinone as an electron acceptor. Part of the enzyme membrane arm which is embedded in the lipid bilayer and involved in proton translocation. In Osphranter robustus (Wallaroo), this protein is NADH-ubiquinone oxidoreductase chain 4L (MT-ND4L).